A 695-amino-acid polypeptide reads, in one-letter code: Putative ATP-dependent RNA helicase L540 (695 aa).

The region spanning 53 to 219 (LSALENYQLV…FNSVDSTVID (167 aa)) is the Helicase ATP-binding domain. 66–73 (SSTGSGKS) contacts ATP. Residues 164–167 (DEAH) carry the DEAH box motif. The region spanning 247 to 434 (LIEDLIHQQI…GINMMNQLMD (188 aa)) is the Helicase C-terminal domain.

The protein belongs to the DEAD box helicase family. DEAH subfamily.

Its subcellular location is the virion. The enzyme catalyses ATP + H2O = ADP + phosphate + H(+). In Acanthamoeba polyphaga (Amoeba), this protein is Putative ATP-dependent RNA helicase L540.